The sequence spans 596 residues: Jacalin-related lectin 46 (596 aa).

A disordered region spans residues 1–20 (MTERSEALGKDGNRRWDDKS). Jacalin-type lectin domains follow at residues 2–143 (TERS…YFTR), 146–291 (PTRI…YFTP), 294–439 (PTKS…HFYP), and 446–592 (AEKL…HVLP).

Belongs to the jacalin lectin family.

The sequence is that of Jacalin-related lectin 46 (JAL46) from Arabidopsis thaliana (Mouse-ear cress).